We begin with the raw amino-acid sequence, 516 residues long: Ribonuclease Y (516 aa).

The chain crosses the membrane as a helical span at residues 1-21 (MLIKIVIACVITAIIVALIAW). Positions 206–269 (TISVVQLPND…ETARIALEKL (64 aa)) constitute a KH domain. The HD domain occupies 332-425 (ALKHSIEVAI…VQAADTISAA (94 aa)).

It belongs to the RNase Y family.

It is found in the cell membrane. Functionally, endoribonuclease that initiates mRNA decay. In Lachnoclostridium phytofermentans (strain ATCC 700394 / DSM 18823 / ISDg) (Clostridium phytofermentans), this protein is Ribonuclease Y.